The chain runs to 1264 residues: Regulator of G-protein signaling 22 (1264 aa).

Residues 565 to 587 (EEFSLSQPPKSPNKSPEVKTATQ) are disordered. Residues 568 to 578 (SLSQPPKSPNK) are compositionally biased toward polar residues. RGS domains lie at 852-980 (KFSD…AARQ) and 1021-1145 (AFRK…TDEN). Residues 1142–1174 (TDENIMSVLERRQEYNKQKKKLAVLEDEKSGKD) adopt a coiled-coil conformation.

In terms of assembly, interacts with GNA11, GNA12 and GNA13. As to expression, testis-specific. Expressed in Leydig cells and spermatogenic cells from the spermatogonia to spermatid stages (at protein level).

Its subcellular location is the cytoplasm. It localises to the nucleus. Inhibits signal transduction by increasing the GTPase activity of G protein alpha subunits thereby driving them into their inactive GDP-bound form. In Homo sapiens (Human), this protein is Regulator of G-protein signaling 22 (RGS22).